A 540-amino-acid polypeptide reads, in one-letter code: Chaperonin GroEL (540 aa).

Residues 30–33 (TLGP), K51, 87–91 (DGTTT), G415, and D495 contribute to the ATP site.

Belongs to the chaperonin (HSP60) family. As to quaternary structure, forms a cylinder of 14 subunits composed of two heptameric rings stacked back-to-back. Interacts with the co-chaperonin GroES.

The protein resides in the cytoplasm. It catalyses the reaction ATP + H2O + a folded polypeptide = ADP + phosphate + an unfolded polypeptide.. Together with its co-chaperonin GroES, plays an essential role in assisting protein folding. The GroEL-GroES system forms a nano-cage that allows encapsulation of the non-native substrate proteins and provides a physical environment optimized to promote and accelerate protein folding. In Serratia marcescens, this protein is Chaperonin GroEL.